Consider the following 141-residue polypeptide: uncharacterized protein (141 aa).

Transmembrane regions (helical) follow at residues 7 to 24 (YRIPFGIGYLLGTFFLSP), 39 to 56 (FLKFLWFPFWVFSRHRGI), 69 to 91 (FYLIFIFFFLYFAVLGVLSILGF), and 116 to 138 (FFILGLIVADLLHIVLDIVSSFI).

It is found in the cell membrane. This is an uncharacterized protein from Aquifex aeolicus (strain VF5).